Consider the following 318-residue polypeptide: NADH-ubiquinone oxidoreductase chain 1 (318 aa).

Helical transmembrane passes span 2-22 (FMIN…FLTL), 70-90 (MFIL…IPLP), 100-120 (LGVL…LWSG), 147-167 (AIIL…TLII), 172-192 (MWLI…TLAE), 222-242 (LFFM…AILF), 253-273 (ELYT…FLWI), and 294-314 (LPLT…TSGI).

It belongs to the complex I subunit 1 family. In terms of assembly, core subunit of respiratory chain NADH dehydrogenase (Complex I) which is composed of 45 different subunits.

Its subcellular location is the mitochondrion inner membrane. The enzyme catalyses a ubiquinone + NADH + 5 H(+)(in) = a ubiquinol + NAD(+) + 4 H(+)(out). Core subunit of the mitochondrial membrane respiratory chain NADH dehydrogenase (Complex I) which catalyzes electron transfer from NADH through the respiratory chain, using ubiquinone as an electron acceptor. Essential for the catalytic activity and assembly of complex I. This Bos indicus (Zebu) protein is NADH-ubiquinone oxidoreductase chain 1 (MT-ND1).